Reading from the N-terminus, the 398-residue chain is MAIRTLDDLAAANRAIGVRVDINSPLTAAGGLADDARLRAHVDTLAELLAADARVAVLAHQGRPGGDEFARLERHADRLDALLDAPVSYCDATFSTGARDAVADLAPGEAVVLENTRFYSEEYMAFAPERAADTALVDGLAPALDAYVNDAFAAAHRSQPSLVGFPEVLPSYAGRVMEAELDALSGVADTPTPRTYVVGGAKVPDSVEVAAHALSHGLADNVLVTGVVANVFLAATGVDLGRASTDFIHERDYGTEIARAADLLAAHNDALHLPVDVAVERDGARCELSTDALPPAGDEAVCDIGSDTVDAYADVLADSETVVVNGPAGVFEDDLFADGTRGVFDAASEVEHSIVGGGDTAAAIRRFDITGFDHVSTGGGAAINLLTDADLPAVAALR.

Residues aspartate 21–asparagine 23, arginine 37, histidine 60–arginine 63, arginine 117, and arginine 157 contribute to the substrate site. Residues glutamate 332 and glycine 357–threonine 360 contribute to the ATP site.

The protein belongs to the phosphoglycerate kinase family. In terms of assembly, monomer.

The protein resides in the cytoplasm. It carries out the reaction (2R)-3-phosphoglycerate + ATP = (2R)-3-phospho-glyceroyl phosphate + ADP. The protein operates within carbohydrate degradation; glycolysis; pyruvate from D-glyceraldehyde 3-phosphate: step 2/5. This is Phosphoglycerate kinase from Halobacterium salinarum (strain ATCC 29341 / DSM 671 / R1).